The chain runs to 445 residues: Phosphoglucosamine mutase 1 (445 aa).

The active-site Phosphoserine intermediate is serine 102. Residues serine 102, aspartate 241, aspartate 243, and aspartate 245 each coordinate Mg(2+). Serine 102 is subject to Phosphoserine.

The protein belongs to the phosphohexose mutase family. Mg(2+) serves as cofactor. Post-translationally, activated by phosphorylation.

The enzyme catalyses alpha-D-glucosamine 1-phosphate = D-glucosamine 6-phosphate. Its function is as follows. Catalyzes the conversion of glucosamine-6-phosphate to glucosamine-1-phosphate. In Shewanella baltica (strain OS185), this protein is Phosphoglucosamine mutase 1.